Consider the following 196-residue polypeptide: Large ribosomal subunit protein uL18 (196 aa).

The protein belongs to the universal ribosomal protein uL18 family. As to quaternary structure, part of the 50S ribosomal subunit. Contacts the 5S and 23S rRNAs.

This is one of the proteins that bind and probably mediate the attachment of the 5S RNA into the large ribosomal subunit, where it forms part of the central protuberance. This chain is Large ribosomal subunit protein uL18, found in Desulfurococcus amylolyticus (strain DSM 18924 / JCM 16383 / VKM B-2413 / 1221n) (Desulfurococcus kamchatkensis).